Reading from the N-terminus, the 270-residue chain is NAD kinase (270 aa).

The active-site Proton acceptor is aspartate 62. NAD(+) is bound by residues 62 to 63 (DG), arginine 67, 129 to 130 (ND), lysine 140, aspartate 159, isoleucine 167, 170 to 175 (TSYSFS), alanine 194, and glutamine 227.

Belongs to the NAD kinase family. Requires a divalent metal cation as cofactor.

The protein localises to the cytoplasm. It carries out the reaction NAD(+) + ATP = ADP + NADP(+) + H(+). Functionally, involved in the regulation of the intracellular balance of NAD and NADP, and is a key enzyme in the biosynthesis of NADP. Catalyzes specifically the phosphorylation on 2'-hydroxyl of the adenosine moiety of NAD to yield NADP. This chain is NAD kinase, found in Picrophilus torridus (strain ATCC 700027 / DSM 9790 / JCM 10055 / NBRC 100828 / KAW 2/3).